The following is a 642-amino-acid chain: 1-deoxy-D-xylulose-5-phosphate synthase (642 aa).

Residues His-73 and 114 to 116 contribute to the thiamine diphosphate site; that span reads SHA. Residue Asp-145 coordinates Mg(2+). Residues 146-147, Asn-175, Phe-286, and Glu-367 each bind thiamine diphosphate; that span reads GA. Asn-175 lines the Mg(2+) pocket.

It belongs to the transketolase family. DXPS subfamily. Homodimer. Mg(2+) is required as a cofactor. The cofactor is thiamine diphosphate.

The enzyme catalyses D-glyceraldehyde 3-phosphate + pyruvate + H(+) = 1-deoxy-D-xylulose 5-phosphate + CO2. The protein operates within metabolic intermediate biosynthesis; 1-deoxy-D-xylulose 5-phosphate biosynthesis; 1-deoxy-D-xylulose 5-phosphate from D-glyceraldehyde 3-phosphate and pyruvate: step 1/1. Catalyzes the acyloin condensation reaction between C atoms 2 and 3 of pyruvate and glyceraldehyde 3-phosphate to yield 1-deoxy-D-xylulose-5-phosphate (DXP). This is 1-deoxy-D-xylulose-5-phosphate synthase from Saccharopolyspora erythraea (strain ATCC 11635 / DSM 40517 / JCM 4748 / NBRC 13426 / NCIMB 8594 / NRRL 2338).